We begin with the raw amino-acid sequence, 172 residues long: Agamous-like MADS-box protein AGL29 (172 aa).

Residues 1-61 (MGRRKIKMEM…GKPFSYGKPN (61 aa)) enclose the MADS-box domain. A coiled-coil region spans residues 86–123 (NYRPKLKRLSERLDLLNQEVEAEKERGEKSQEKLESAG). Residues 106–125 (EAEKERGEKSQEKLESAGDE) are disordered.

Expressed in pollen.

The protein resides in the nucleus. Functionally, probable transcription factor. The polypeptide is Agamous-like MADS-box protein AGL29 (Arabidopsis thaliana (Mouse-ear cress)).